Consider the following 339-residue polypeptide: NADP-dependent dehydrogenase M3 (339 aa).

Residues serine 49, isoleucine 51, aspartate 93, tyrosine 206, lysine 210, isoleucine 240, and glutamine 244 each contribute to the NADP(+) site. Tyrosine 206 (proton acceptor) is an active-site residue. The active-site Lowers pKa of active site Tyr is lysine 210.

The protein belongs to the short-chain dehydrogenases/reductases (SDR) family. Homodimer.

The protein resides in the cytoplasm. Its subcellular location is the cytosol. The protein operates within secondary metabolite biosynthesis. In terms of biological role, NADP-dependent dehydrogenase; part of the gene cluster that mediates the biosynthesis of squalestatin S1 (SQS1, also known as zaragozic acid A), a heavily oxidized fungal polyketide that offers potent cholesterol lowering activity by targeting squalene synthase (SS). SQS1 is composed of a 2,8-dioxobicyclic[3.2.1]octane-3,4,5-tricarboxyclic acid core that is connected to two lipophilic polyketide arms. These initial steps feature the priming of an unusual benzoic acid starter unit onto the highly reducing polyketide synthase pks2, followed by oxaloacetate extension and product release to generate a tricarboxylic acid containing product. The phenylalanine ammonia lyase (PAL) M7 and the acyl-CoA ligase M9 are involved in transforming phenylalanine into benzoyl-CoA. The citrate synthase-like protein R3 is involved in connecting the C-alpha-carbons of the hexaketide chain and oxaloacetate to afford the tricarboxylic acid unit. The potential hydrolytic enzymes, M8 and M10, are in close proximity to pks2 and may participate in product release. On the other side, the tetraketide arm is synthesized by a the squalestatin tetraketide synthase pks1 and enzymatically esterified to the core in the last biosynthetic step, by the acetyltransferase M4. The biosynthesis of the tetraketide must involve 3 rounds of chain extension. After the first and second rounds methyl-transfer occurs, and in all rounds of extension the ketoreductase and dehydratase are active. The enoyl reductase and C-MeT of pks1 are not active in the final round of extension. The acetyltransferase M4 appears to have a broad substrate selectivity for its acyl CoA substrate, allowing the in vitro synthesis of novel squalestatins. The biosynthesis of SQS1 requires several oxidative steps likely performed by oxidoreductases M1, R1 and R2. Finally, in support of the identification of the cluster as being responsible for SQS1 production, the cluster contains a gene encoding a putative squalene synthase (SS) R6, suggesting a likely mechanism for self-resistance. In Phoma sp. (strain ATCC 20986 / MF5453), this protein is NADP-dependent dehydrogenase M3.